A 58-amino-acid chain; its full sequence is SPbeta prophage-derived uncharacterized protein YotN (58 aa).

The polypeptide is SPbeta prophage-derived uncharacterized protein YotN (yotN) (Bacillus subtilis (strain 168)).